Consider the following 126-residue polypeptide: Lymphocyte antigen 6 complex locus protein G6c (126 aa).

The signal sequence occupies residues 1–19 (MKHLLLLTLSALLYCWVSA). Residues 21–112 (TRCHSCYKVP…PRPTPALALI (92 aa)) form the UPAR/Ly6 domain. Cystine bridges form between Cys-23/Cys-48, Cys-26/Cys-34, and Cys-40/Cys-66. A glycan (N-linked (GlcNAc...) (high mannose) asparagine) is linked at Asn-89. Cysteines 93 and 98 form a disulfide. A lipid anchor (GPI-anchor amidated serine) is attached at Ser-100. A propeptide spans 101–126 (PAPRPTPALALISLTSLAGLGLWLLH) (removed in mature form).

In terms of assembly, monomer. Post-translationally, N-glycosylated. In terms of tissue distribution, highly expressed at the leading edges of cells, on filopodia.

The protein localises to the cell membrane. The chain is Lymphocyte antigen 6 complex locus protein G6c (Ly6g6c) from Mus musculus (Mouse).